Reading from the N-terminus, the 235-residue chain is Phosphoribosylaminoimidazole-succinocarboxamide synthase (235 aa).

Belongs to the SAICAR synthetase family.

The catalysed reaction is 5-amino-1-(5-phospho-D-ribosyl)imidazole-4-carboxylate + L-aspartate + ATP = (2S)-2-[5-amino-1-(5-phospho-beta-D-ribosyl)imidazole-4-carboxamido]succinate + ADP + phosphate + 2 H(+). Its pathway is purine metabolism; IMP biosynthesis via de novo pathway; 5-amino-1-(5-phospho-D-ribosyl)imidazole-4-carboxamide from 5-amino-1-(5-phospho-D-ribosyl)imidazole-4-carboxylate: step 1/2. This is Phosphoribosylaminoimidazole-succinocarboxamide synthase from Thermococcus kodakarensis (strain ATCC BAA-918 / JCM 12380 / KOD1) (Pyrococcus kodakaraensis (strain KOD1)).